The chain runs to 633 residues: ATP-dependent zinc metalloprotease FtsH (633 aa).

Residues 1 to 19 (MTPSNEPGKQDQIPQPGPT) are Cytoplasmic-facing. Residues 20-40 (IPNQYSFLWLSAAIFLMFLWL) form a helical membrane-spanning segment. At 41–133 (QGNNQQQQQE…SRSGRPWWQE (93 aa)) the chain is on the periplasmic side. A helical transmembrane segment spans residues 134 to 154 (LILGFLPWILLLALMFWFWGA). Residues 155-633 (AQKRMTQGGG…LEEARSRETA (479 aa)) lie on the Cytoplasmic side of the membrane. 226 to 233 (GPPGTGKT) is a binding site for ATP. Histidine 447 serves as a coordination point for Zn(2+). Residue glutamate 448 is part of the active site. Zn(2+) is bound by residues histidine 451 and aspartate 523.

The protein in the central section; belongs to the AAA ATPase family. It in the C-terminal section; belongs to the peptidase M41 family. Homohexamer. Zn(2+) is required as a cofactor.

It is found in the cell inner membrane. Acts as a processive, ATP-dependent zinc metallopeptidase for both cytoplasmic and membrane proteins. Plays a role in the quality control of integral membrane proteins. This is ATP-dependent zinc metalloprotease FtsH from Marinobacter nauticus (strain ATCC 700491 / DSM 11845 / VT8) (Marinobacter aquaeolei).